The chain runs to 426 residues: DNA primase DnaG (426 aa).

One can recognise a Toprim domain in the interval 171–245 (DTVILVEGRA…KVDFVARAPP (75 aa)). Mg(2+) contacts are provided by Glu-177, Asp-219, and Asp-221. Residues 407 to 426 (KSEENIQESVSTGESAQTSP) form a disordered region. Over residues 413–426 (QESVSTGESAQTSP) the composition is skewed to polar residues.

Belongs to the archaeal DnaG primase family. In terms of assembly, forms a ternary complex with MCM helicase and DNA. Component of the archaeal exosome complex. Requires Mg(2+) as cofactor.

The enzyme catalyses ssDNA + n NTP = ssDNA/pppN(pN)n-1 hybrid + (n-1) diphosphate.. Functionally, RNA polymerase that catalyzes the synthesis of short RNA molecules used as primers for DNA polymerase during DNA replication. Also part of the exosome, which is a complex involved in RNA degradation. Acts as a poly(A)-binding protein that enhances the interaction between heteromeric, adenine-rich transcripts and the exosome. This is DNA primase DnaG from Thermofilum pendens (strain DSM 2475 / Hrk 5).